A 116-amino-acid chain; its full sequence is Ribonuclease P protein component (116 aa).

It belongs to the RnpA family. As to quaternary structure, consists of a catalytic RNA component (M1 or rnpB) and a protein subunit.

The catalysed reaction is Endonucleolytic cleavage of RNA, removing 5'-extranucleotides from tRNA precursor.. Functionally, RNaseP catalyzes the removal of the 5'-leader sequence from pre-tRNA to produce the mature 5'-terminus. It can also cleave other RNA substrates such as 4.5S RNA. The protein component plays an auxiliary but essential role in vivo by binding to the 5'-leader sequence and broadening the substrate specificity of the ribozyme. This Picosynechococcus sp. (strain ATCC 27264 / PCC 7002 / PR-6) (Agmenellum quadruplicatum) protein is Ribonuclease P protein component.